Here is a 106-residue protein sequence, read N- to C-terminus: Urease subunit beta (106 aa).

The protein belongs to the urease beta subunit family. In terms of assembly, heterotrimer of UreA (gamma), UreB (beta) and UreC (alpha) subunits. Three heterotrimers associate to form the active enzyme.

The protein resides in the cytoplasm. It carries out the reaction urea + 2 H2O + H(+) = hydrogencarbonate + 2 NH4(+). It functions in the pathway nitrogen metabolism; urea degradation; CO(2) and NH(3) from urea (urease route): step 1/1. The polypeptide is Urease subunit beta (Synechococcus sp. (strain CC9902)).